The chain runs to 689 residues: MGKNFLLEIGTEEMPAHFIDPAIRQMYDFSLEYFKNKKISLESVKIWATPRRLVVYIENLGEKQEAQEEEIRGPAAHIGYKDGMWTEVAKRFVEQYGASLEDLHIEETPKGKYIFLRKVKEGMNTLEILPDYITSLLKSIRFPKMMKWGDVDFYFGRPIRWIVALYGDTEIEVEIAGVKSSRYSRPPRFLPQIPIEIRDADSYLNVMRENYIIVDQEERKNEILKQINKIANENSFILDYEDDLLKEVNYLVEYPTALLGEFDKKYLALPEVVLIITMEKKQRYFPLRDADGNLTNKFIVIRNGTDNYKDIVIQGNEKVLKARLSDAEYYYHEDTKHPLEKYTEKLSGIIFQEQLGTIKDKVERVRILVREIANILGLSSEENKILERSVNLYKADLGTLMVSEYPELHGIMGRIYAKISGEKDPIPEVIGEYIYPRTLDDRLPSNFLASILGIADRIDSLTGYFALDLFPTGSEDPIGLRRISGGLLRLLLESSLKLNLRNLFVKSFEIYNFGEKYPLSQIDKGMGFIGQRLRNLLLDRYSIDIVDAVMEVGYDEMWRLKRRLDFISKFKEKESYEKLKKALNRLYRILPKDFTPKEVSENLLSSPFEKKLYEDYLKIKNEIFNDILEGNYEVLLSYDFLNEFSDDIEKFFDNVLVMSPNEDERINRLSLLSLIKLLFWEILDWSRLS.

Belongs to the class-II aminoacyl-tRNA synthetase family. Tetramer of two alpha and two beta subunits.

It is found in the cytoplasm. It carries out the reaction tRNA(Gly) + glycine + ATP = glycyl-tRNA(Gly) + AMP + diphosphate. The protein is Glycine--tRNA ligase beta subunit of Dictyoglomus thermophilum (strain ATCC 35947 / DSM 3960 / H-6-12).